The primary structure comprises 199 residues: 7-methyl-GTP pyrophosphatase (199 aa).

D76 acts as the Proton acceptor in catalysis.

This sequence belongs to the Maf family. YceF subfamily. Requires a divalent metal cation as cofactor.

Its subcellular location is the cytoplasm. The enzyme catalyses N(7)-methyl-GTP + H2O = N(7)-methyl-GMP + diphosphate + H(+). In terms of biological role, nucleoside triphosphate pyrophosphatase that hydrolyzes 7-methyl-GTP (m(7)GTP). May have a dual role in cell division arrest and in preventing the incorporation of modified nucleotides into cellular nucleic acids. The sequence is that of 7-methyl-GTP pyrophosphatase from Nitrosococcus oceani (strain ATCC 19707 / BCRC 17464 / JCM 30415 / NCIMB 11848 / C-107).